The primary structure comprises 951 residues: 5'-3' exoribonuclease 2 (951 aa).

The CCHC-type zinc finger occupies Pro-262–Gly-278. Lys-286 is modified (N6-acetyllysine). Positions Lys-408–Asn-508 are disordered. Basic residues predominate over residues Arg-416 to Lys-426. Position 439 is a phosphothreonine (Thr-439). Polar residues-rich tracts occupy residues Ser-445–Arg-458 and Gln-467–Ser-485. Phosphoserine is present on residues Ser-448, Ser-471, Ser-473, Ser-475, Ser-482, Ser-487, Ser-499, Ser-501, and Ser-678. 3 positions are modified to asymmetric dimethylarginine; alternate: Arg-824, Arg-847, and Arg-851. Omega-N-methylarginine; alternate is present on residues Arg-824, Arg-847, and Arg-851. Arg-880 carries the asymmetric dimethylarginine modification. Position 883 is an asymmetric dimethylarginine; alternate (Arg-883). Arg-883 bears the Omega-N-methylarginine; alternate mark. Position 895 is an omega-N-methylarginine (Arg-895). A disordered region spans residues Asn-907–Asn-951. Positions Pro-920–Lys-938 are enriched in basic and acidic residues. Arg-947 carries the asymmetric dimethylarginine; alternate modification. Omega-N-methylarginine; alternate is present on Arg-947.

The protein belongs to the 5'-3' exonuclease family. XRN2/RAT1 subfamily. As to quaternary structure, interacts with POLR2A and SMN1/SMN2. Interacts with CDKN2AIP and NKRF. Interacts with CDKN2AIPNL; the interaction is direct. Interacts with TRIM71 (via NHL repeats) in an RNA-dependent manner. Interacts with DHX34; the interaction is RNA-independent. In terms of tissue distribution, expressed in the spleen, testis, heart, brain, lung, liver, skeletal muscle, and kidney.

Its subcellular location is the nucleus. It is found in the nucleolus. In terms of biological role, possesses 5'-&gt;3' exoribonuclease activity. May promote the termination of transcription by RNA polymerase II. During transcription termination, cleavage at the polyadenylation site liberates a 5' fragment which is subsequently processed to form the mature mRNA and a 3' fragment which remains attached to the elongating polymerase. The processive degradation of this 3' fragment by this protein may promote termination of transcription. Binds to RNA polymerase II (RNAp II) transcription termination R-loops formed by G-rich pause sites. The polypeptide is 5'-3' exoribonuclease 2 (Xrn2) (Mus musculus (Mouse)).